The following is a 206-amino-acid chain: Synaptosomal-associated protein 25 (206 aa).

Positions 1-20 are enriched in basic and acidic residues; sequence MAEDADMRNELEEMQRRADQ. The interval 1–25 is disordered; it reads MAEDADMRNELEEMQRRADQLADES. Positions 1 to 75 are interaction with CENPF; sequence MAEDADMRNE…QINKDMKEAE (75 aa). One can recognise a t-SNARE coiled-coil homology 1 domain in the interval 19–81; the sequence is DQLADESLES…KEAEKNSTDL (63 aa). S-palmitoyl cysteine attachment occurs at residues C85, C88, C90, and C92. Residues 111–120 form an interaction with ZDHHC17 region; the sequence is GVVASQPARV. T138 carries the phosphothreonine modification. The t-SNARE coiled-coil homology 2 domain maps to 140 to 202; sequence DARENEMDEN…DEANQRATKM (63 aa). Residues S154 and S187 each carry the phosphoserine modification.

Belongs to the SNAP-25 family. In terms of assembly, part of the SNARE core complex containing SNAP25, VAMP2 and STX1A; this complex binds CPLX1. Found in a complex containing SYT1, SV2B and syntaxin-1. Found in a ternary complex with STX1A and VAMP8. Interacts with HSC70 and with SYT9, forming a complex with DNAJC5. The interaction with SYT9 is inhibited in presence of calcium. Isoform 1 and isoform 2 interact with BLOC1S6. Interacts with CENPF. Interacts with EQTN. Interacts with HGS. Interacts with KCNB1 (via N-terminus); reduces the voltage-dependent potassium channel KCNB1 activity in pancreatic beta cells. Interacts with OTOF. Interacts with RIMS1. Interacts with SNAPIN. Interacts with STXBP6. Interacts with TRIM9. Interacts with ZDHHC13 (via ANK repeats). Interacts with ZDHHC17 (via ANK repeats). Associates with the BLOC-1 complex. Interacts with PLCL1 (via C2 domain). Interacts with PRRT2; this interaction may impair the formation of the SNARE complex. Interacts with alpha-synuclein/SNCA. Interacts with PRPH2. Interacts with ROM1. Interacts with STX3. In terms of processing, palmitoylated. Cys-85 appears to be the main site, and palmitoylation is required for membrane association.

Its subcellular location is the cytoplasm. It is found in the perinuclear region. The protein resides in the cell membrane. It localises to the synapse. The protein localises to the synaptosome. Its subcellular location is the photoreceptor inner segment. Functionally, t-SNARE involved in the molecular regulation of neurotransmitter release. May play an important role in the synaptic function of specific neuronal systems. Associates with proteins involved in vesicle docking and membrane fusion. Regulates plasma membrane recycling through its interaction with CENPF. Modulates the gating characteristics of the delayed rectifier voltage-dependent potassium channel KCNB1 in pancreatic beta cells. The chain is Synaptosomal-associated protein 25 (SNAP25) from Pongo abelii (Sumatran orangutan).